We begin with the raw amino-acid sequence, 174 residues long: Thioredoxin O, mitochondrial (174 aa).

A mitochondrion-targeting transit peptide spans 1 to 59 (MALAHRLCRLPRLLPLAAAAAASKPYLPGKPSPAPPPPLSSPPPFPSLSRLFSTTPSSS). In terms of domain architecture, Thioredoxin spans 60-172 (GDSSMVVVGS…LESTMESLHK (113 aa)). Catalysis depends on nucleophile residues Cys-96 and Cys-99. A disulfide bridge connects residues Cys-96 and Cys-99.

Belongs to the thioredoxin family. Plant O-type subfamily.

The protein localises to the mitochondrion. Its function is as follows. Probable thiol-disulfide oxidoreductase that may participate in various redox reactions. This chain is Thioredoxin O, mitochondrial, found in Oryza sativa subsp. japonica (Rice).